The following is a 418-amino-acid chain: Oxalate:formate antiporter (418 aa).

12 consecutive transmembrane segments (helical) span residues 17–37, 48–68, 84–104, 108–128, 141–161, 172–192, 222–242, 250–270, 288–308, 311–331, 350–370, and 378–398; these read WFYLVLAVLLMCMISGVQYSW, LGVSLAAVQTAFTLSQVIQAG, IPLMFGGAMVLAGWTFMGMVD, ALYALYTLAGAGVGIVYGIAM, LASGFTAAGYGLGVLPFLPLI, AAFMYTGLIMGILIILIAFVI, FWVLWTAFFSVNFGGLLLVAN, LGLAAGVLTIGVSIQNLFNGG, MSVVFGINAVVLALFPTIAAL, VAFIAMLAIAFFTWGGSYALF, FFWAAKATASIFGGGLGAAIA, and AFLITAITSFIAFALATFVIP. Residue lysine 355 participates in oxalate binding.

Belongs to the major facilitator superfamily. OFA (TC 2.A.1.11) family. In terms of assembly, monomer.

It localises to the cell inner membrane. In terms of biological role, anion transporter that carries out the exchange of divalent oxalate with monovalent formate, the product of oxalate decarboxylation, at the plasma membrane, and in doing so catalyzes the vectorial portion of a proton-motive metabolic cycle that drives ATP synthesis. The sequence is that of Oxalate:formate antiporter (oxlT) from Oxalobacter formigenes.